A 181-amino-acid chain; its full sequence is Large ribosomal subunit protein uL22 (181 aa).

A disordered region spans residues 157–181 (PEAAKKPGKKTSAVEKSKKATAATH).

Belongs to the universal ribosomal protein uL22 family.

This Biphyllus lunatus (Beetle) protein is Large ribosomal subunit protein uL22 (RpL17).